The chain runs to 495 residues: UDP-N-acetylmuramoyl-L-alanyl-D-glutamate--2,6-diaminopimelate ligase (495 aa).

Serine 29 serves as a coordination point for UDP-N-acetyl-alpha-D-muramoyl-L-alanyl-D-glutamate. Position 111-117 (111-117) interacts with ATP; sequence GTNGKTS. UDP-N-acetyl-alpha-D-muramoyl-L-alanyl-D-glutamate is bound by residues 153-154, serine 180, glutamine 186, and arginine 188; that span reads TT. Position 220 is an N6-carboxylysine (lysine 220). Meso-2,6-diaminopimelate-binding positions include arginine 384, 408-411, glycine 459, and glutamate 463; that span reads DNPR. A Meso-diaminopimelate recognition motif motif is present at residues 408–411; sequence DNPR.

The protein belongs to the MurCDEF family. MurE subfamily. Mg(2+) is required as a cofactor. In terms of processing, carboxylation is probably crucial for Mg(2+) binding and, consequently, for the gamma-phosphate positioning of ATP.

The protein localises to the cytoplasm. The catalysed reaction is UDP-N-acetyl-alpha-D-muramoyl-L-alanyl-D-glutamate + meso-2,6-diaminopimelate + ATP = UDP-N-acetyl-alpha-D-muramoyl-L-alanyl-gamma-D-glutamyl-meso-2,6-diaminopimelate + ADP + phosphate + H(+). It functions in the pathway cell wall biogenesis; peptidoglycan biosynthesis. In terms of biological role, catalyzes the addition of meso-diaminopimelic acid to the nucleotide precursor UDP-N-acetylmuramoyl-L-alanyl-D-glutamate (UMAG) in the biosynthesis of bacterial cell-wall peptidoglycan. In Xylella fastidiosa (strain Temecula1 / ATCC 700964), this protein is UDP-N-acetylmuramoyl-L-alanyl-D-glutamate--2,6-diaminopimelate ligase.